The primary structure comprises 145 residues: 3-hydroxyacyl-[acyl-carrier-protein] dehydratase FabZ (145 aa).

The active site involves histidine 47.

The protein belongs to the thioester dehydratase family. FabZ subfamily.

It is found in the cytoplasm. The catalysed reaction is a (3R)-hydroxyacyl-[ACP] = a (2E)-enoyl-[ACP] + H2O. Functionally, involved in unsaturated fatty acids biosynthesis. Catalyzes the dehydration of short chain beta-hydroxyacyl-ACPs and long chain saturated and unsaturated beta-hydroxyacyl-ACPs. This is 3-hydroxyacyl-[acyl-carrier-protein] dehydratase FabZ from Chromohalobacter salexigens (strain ATCC BAA-138 / DSM 3043 / CIP 106854 / NCIMB 13768 / 1H11).